We begin with the raw amino-acid sequence, 215 residues long: Adenylate kinase (215 aa).

An ATP-binding site is contributed by 10 to 15 (GAGKGT). Residues 30 to 59 (STGDILRANVREGTELGLAAKAYMDKGELV) are NMP. AMP is bound by residues threonine 31, arginine 36, 57–59 (ELV), 85–88 (GYPR), and glutamine 92. An LID region spans residues 126-162 (GRLMCKCGASYHIISNPPKKDNVCDICGGEVFQRADD). An ATP-binding site is contributed by arginine 127. Zn(2+) contacts are provided by cysteine 130 and cysteine 132. 135–136 (SY) is an ATP binding site. 2 residues coordinate Zn(2+): cysteine 149 and cysteine 152. Residues arginine 159 and arginine 170 each contribute to the AMP site. Lysine 198 serves as a coordination point for ATP.

This sequence belongs to the adenylate kinase family. Monomer.

The protein localises to the cytoplasm. The catalysed reaction is AMP + ATP = 2 ADP. Its pathway is purine metabolism; AMP biosynthesis via salvage pathway; AMP from ADP: step 1/1. Its function is as follows. Catalyzes the reversible transfer of the terminal phosphate group between ATP and AMP. Plays an important role in cellular energy homeostasis and in adenine nucleotide metabolism. This Methanosarcina acetivorans (strain ATCC 35395 / DSM 2834 / JCM 12185 / C2A) protein is Adenylate kinase.